We begin with the raw amino-acid sequence, 123 residues long: Ribosome-binding factor A (123 aa).

The protein belongs to the RbfA family. As to quaternary structure, monomer. Binds 30S ribosomal subunits, but not 50S ribosomal subunits or 70S ribosomes.

The protein localises to the cytoplasm. In terms of biological role, one of several proteins that assist in the late maturation steps of the functional core of the 30S ribosomal subunit. Associates with free 30S ribosomal subunits (but not with 30S subunits that are part of 70S ribosomes or polysomes). Required for efficient processing of 16S rRNA. May interact with the 5'-terminal helix region of 16S rRNA. This Chlamydia trachomatis serovar L2 (strain ATCC VR-902B / DSM 19102 / 434/Bu) protein is Ribosome-binding factor A.